The chain runs to 492 residues: Differentially expressed in FDCP 8 homolog (492 aa).

Gly residues predominate over residues 38 to 51 (GLGGSGSTGSGSEA). The disordered stretch occupies residues 38–62 (GLGGSGSTGSGSEAGGSEESGPQGA). 2 Phorbol-ester/DAG-type zinc fingers span residues 161 to 214 (PHHG…KRVC) and 400 to 453 (DHIR…NMIC). The segment at 468–492 (RMKSTEDDDDDDDGVATDDDVTAAE) is disordered. Residues 473 to 492 (EDDDDDDDGVATDDDVTAAE) are compositionally biased toward acidic residues.

It belongs to the DEF8 family.

This is Differentially expressed in FDCP 8 homolog from Drosophila melanogaster (Fruit fly).